We begin with the raw amino-acid sequence, 284 residues long: Deoxyribonuclease-1 (284 aa).

The signal sequence occupies residues 1–22; sequence MRYTGLMGILLTLVNLLQLAAT. Asn40 carries an N-linked (GlcNAc...) asparagine glycan. Glu100 is an active-site residue. Residues Cys123 and Cys126 are joined by a disulfide bond. An N-linked (GlcNAc...) asparagine glycan is attached at Asn128. Residue His156 is part of the active site. The cysteines at positions 195 and 231 are disulfide-linked.

This sequence belongs to the DNase I family. It depends on Ca(2+) as a cofactor. The cofactor is Mg(2+).

The protein resides in the secreted. The protein localises to the zymogen granule. Its subcellular location is the nucleus envelope. It catalyses the reaction Endonucleolytic cleavage to 5'-phosphodinucleotide and 5'-phosphooligonucleotide end-products.. Its function is as follows. Serum endocuclease secreted into body fluids by a wide variety of exocrine and endocrine organs. Expressed by non-hematopoietic tissues and preferentially cleaves protein-free DNA. Among other functions, seems to be involved in cell death by apoptosis. Binds specifically to G-actin and blocks actin polymerization. Together with DNASE1L3, plays a key role in degrading neutrophil extracellular traps (NETs). NETs are mainly composed of DNA fibers and are released by neutrophils to bind pathogens during inflammation. Degradation of intravascular NETs by DNASE1 and DNASE1L3 is required to prevent formation of clots that obstruct blood vessels and cause organ damage following inflammation. The sequence is that of Deoxyribonuclease-1 (Dnase1) from Rattus norvegicus (Rat).